Here is a 447-residue protein sequence, read N- to C-terminus: Delta(5) fatty acid desaturase fat-4 (447 aa).

Residues 1–80 (MVLREQEHEP…TQEPEIPDIK (80 aa)) form the Cytochrome b5 heme-binding domain. Helical transmembrane passes span 137-157 (IFTI…PSAI), 257-277 (WTFM…IFVS), 292-312 (IYEQ…LYFL), and 319-339 (IMFF…VVTF).

Belongs to the fatty acid desaturase type 1 family.

The protein resides in the membrane. The catalysed reaction is (11Z,14Z)-eicosadienoyl-CoA + 2 Fe(II)-[cytochrome b5] + O2 + 2 H(+) = (5Z,11Z,14Z)-eicosatrienoyl-CoA + 2 Fe(III)-[cytochrome b5] + 2 H2O. It carries out the reaction (11Z,14Z,17Z)-eicosatrienoyl-CoA + 2 Fe(II)-[cytochrome b5] + O2 + 2 H(+) = (5Z,11Z,14Z,17Z)-eicosatetraenoyl-CoA + 2 Fe(III)-[cytochrome b5] + 2 H2O. The enzyme catalyses (8Z,11Z,14Z,17Z)-eicosatetraenoyl-CoA + 2 Fe(II)-[cytochrome b5] + O2 + 2 H(+) = (5Z,8Z,11Z,14Z,17Z)-eicosapentaenoyl-CoA + 2 Fe(III)-[cytochrome b5] + 2 H2O. It catalyses the reaction (8Z,11Z,14Z)-eicosatrienoyl-CoA + 2 Fe(II)-[cytochrome b5] + O2 + 2 H(+) = (5Z,8Z,11Z,14Z)-eicosatetraenoyl-CoA + 2 Fe(III)-[cytochrome b5] + 2 H2O. Its pathway is lipid metabolism; polyunsaturated fatty acid biosynthesis. Functionally, can function as a Delta(5) fatty acid desaturase and behaves as a (8-3) desaturase. Introduces a double bond in the fatty acid chain 5 carbons away from carboxy terminal to biosynthesize polyunsaturated fatty acids (PUFAs) endogenously (PUFAs are essential for membrane structure and many cellular and physiological processes). Acts on a variety of substrates such as dihomo-gamma-linoleoyl-CoA ((8Z,11Z,14Z)-eicosatrienoyl-CoA, 20:3n-6) to generate arachidonoyl-CoA ((5Z,8Z,11Z,14Z)-eicosatetraenoyl-CoA, 20:4n-6). Also acts on a number of other substrates, including fatty acids that do not contain a double bond at the 8 position like (11Z,14Z,17Z)-eicosatrienoyl-CoA (20:3n-3) to produce (5Z,11Z,14Z,17Z)-eicosatetraenoyl-CoA (20:4n-3). Unlike plants, Caenorhabditis elegans desaturases seem to use fatty acyl-CoAs as substrates. In Caenorhabditis elegans, this protein is Delta(5) fatty acid desaturase fat-4 (fat-4).